We begin with the raw amino-acid sequence, 422 residues long: Ferrochelatase, mitochondrial (422 aa).

A mitochondrion-targeting transit peptide spans 1–53 (MLSASANMAAALRAAGALLREPLVHGSSRACQPWRCQSGAAVAATTEKVHHAK). Lysine 56 carries the post-translational modification N6-acetyllysine. Arginine 114, tyrosine 122, and serine 129 together coordinate protoporphyrin IX. At lysine 137 the chain carries N6-succinyllysine. Cysteine 195 provides a ligand contact to [2Fe-2S] cluster. The active site involves histidine 229. At lysine 289 the chain carries N6-acetyllysine; alternate. Lysine 289 bears the N6-succinyllysine; alternate mark. The active site involves aspartate 382. Residues cysteine 402, cysteine 405, and cysteine 410 each contribute to the [2Fe-2S] cluster site. Lysine 414 carries the post-translational modification N6-acetyllysine; alternate. Position 414 is an N6-succinyllysine; alternate (lysine 414).

It belongs to the ferrochelatase family. In terms of assembly, homodimer. Homotetramer. Interaction with PGRMC1; the interaction results in decreased FECH activity. Interacts with ABCB10 and SLC25A37; this interaction forms an oligomeric complex. Forms a complex with ABCB7 and ABCB10, where a dimeric FECH bridges ABCB7 and ABCB10 homodimers; this complex may be required for cellular iron homeostasis, mitochondrial function and heme biosynthesis. Interacts with ABCB7 and ABCB10. Requires [2Fe-2S] cluster as cofactor. In terms of tissue distribution, erythroid and hepatic cells.

Its subcellular location is the mitochondrion inner membrane. The catalysed reaction is heme b + 2 H(+) = protoporphyrin IX + Fe(2+). Its pathway is porphyrin-containing compound metabolism; protoheme biosynthesis; protoheme from protoporphyrin-IX: step 1/1. Its function is as follows. Catalyzes the ferrous insertion into protoporphyrin IX. In Mus musculus (Mouse), this protein is Ferrochelatase, mitochondrial.